The chain runs to 420 residues: Heterogeneous nuclear ribonucleoprotein D-like (420 aa).

Disordered stretches follow at residues 1-83 and 96-120; these read MEVP…RRRP and QRSA…SVTM. Arginine 25 carries the omega-N-methylarginine modification. The span at 36 to 52 shows a compositional bias: low complexity; that stretch reads RQLAPLLPSLAPSSARQ. RRM domains are found at residues 148-230 and 233-312; these read GKMF…KGKE and KKVF…QPKE. The residue at position 161 (lysine 161) is an N6-methyllysine. Lysine 209 participates in a covalent cross-link: Glycyl lysine isopeptide (Lys-Gly) (interchain with G-Cter in SUMO2). At lysine 216 the chain carries N6-acetyllysine. The residue at position 241 (serine 241) is a Phosphoserine. Disordered stretches follow at residues 313–348 and 398–420; these read VYRQ…NWNQ and GQQS…YQPY. Gly residues predominate over residues 323-342; sequence GGRGAAAGGRGGTRGRGRGQ. Positions 342-420 are necessary for interaction with TNPO1; that stretch reads QGQNWNQGFN…GNHQNNYQPY (79 aa). The segment at 396–420 is necessary for its nuclear import and export; that stretch reads YSGQQSTYGKASRGGGNHQNNYQPY. Arginine 408 is subject to Dimethylated arginine; alternate. An Omega-N-methylarginine; alternate modification is found at arginine 408.

Interacts with ZNF148. Interacts with TNPO1. Post-translationally, dimethylation of Arg-408 is probably of the asymmetric type. Expressed in heart, brain, placenta, lung, liver, skeletal muscle, kidney, pancreas, spleen, thymus, prostate, testis, ovary, small intestine, colon and leukocytes. Expressed in myeloid leukemia, gastric adenocarcinoma, cervical carcinoma, hepatoma, fibrosarcoma, colon adenocarcinoma, epidermoid carcinoma, osteosarcoma and urinary bladder carcinoma cells.

It localises to the nucleus. It is found in the cytoplasm. In terms of biological role, acts as a transcriptional regulator. Promotes transcription repression. Promotes transcription activation in differentiated myotubes. Binds to double- and single-stranded DNA sequences. Binds to the transcription suppressor CATR sequence of the COX5B promoter. Binds with high affinity to RNA molecules that contain AU-rich elements (AREs) found within the 3'-UTR of many proto-oncogenes and cytokine mRNAs. Binds both to nuclear and cytoplasmic poly(A) mRNAs. Binds to poly(G) and poly(A), but not to poly(U) or poly(C) RNA homopolymers. Binds to the 5'-ACUAGC-3' RNA consensus sequence. In Homo sapiens (Human), this protein is Heterogeneous nuclear ribonucleoprotein D-like (HNRNPDL).